The sequence spans 481 residues: Cysteine--tRNA ligase (481 aa).

Cys29 provides a ligand contact to Zn(2+). A 'HIGH' region motif is present at residues Pro31–His41. Residues Cys210, His235, and Glu239 each contribute to the Zn(2+) site. The 'KMSKS' region motif lies at Lys272 to Ser276. Lys275 lines the ATP pocket.

Belongs to the class-I aminoacyl-tRNA synthetase family. As to quaternary structure, monomer. Requires Zn(2+) as cofactor.

Its subcellular location is the cytoplasm. It carries out the reaction tRNA(Cys) + L-cysteine + ATP = L-cysteinyl-tRNA(Cys) + AMP + diphosphate. This is Cysteine--tRNA ligase from Anaeromyxobacter sp. (strain K).